Reading from the N-terminus, the 155-residue chain is Protein FAM201A (155 aa).

Positions 130-155 are disordered; sequence QDQGCGQHRPHSPRLVDIALPGGGWT.

The sequence is that of Protein FAM201A (FAM201A) from Homo sapiens (Human).